A 356-amino-acid chain; its full sequence is MALLTDLLNLDLSGSTEKIIAEYIWIGGSGMDLRSKARHLPGPVTHPSKLPKWNYDGSSTGQAPGEDSEVILYPQAILKDPFREGNNILVMCDCYTPRGEPIPTNKRYNAAKILSNPDVAKEEPWYGIEQEYTLLQKDINWPLGWPVGGFPGPQGPYYCGIGADKSFGRDIVDSHYKACLFGGVNISGINGEVMPGQWEFQVGPTVGISAGDQVWVARYILERITEIAGVVVTFDPKPIPGDWNGAGAHTNYSTESMRNDGGFKVIVDAVEKLKLKHKEHIAAYGEGNERRLTGKHETADINTSSWGVANRGASVRVGRETEQNGKGYFEDRRPASNMDPYVVTSMIAQTTILWKP.

In terms of domain architecture, GS beta-grasp spans 19–99 (IIAEYIWIGG…VMCDCYTPRG (81 aa)). The GS catalytic domain occupies 106 to 356 (KRYNAAKILS…IAQTTILWKP (251 aa)).

The protein belongs to the glutamine synthetase family. In terms of assembly, homooctamer.

The protein localises to the cytoplasm. The enzyme catalyses L-glutamate + NH4(+) + ATP = L-glutamine + ADP + phosphate + H(+). This chain is Glutamine synthetase, found in Hordeum vulgare (Barley).